A 687-amino-acid chain; its full sequence is DNA-directed RNA polymerase subunit beta' (687 aa).

Cys69, Cys71, Cys87, and Cys90 together coordinate Zn(2+). Asp493, Asp495, and Asp497 together coordinate Mg(2+).

Belongs to the RNA polymerase beta' chain family. RpoC1 subfamily. In plastids the minimal PEP RNA polymerase catalytic core is composed of four subunits: alpha, beta, beta', and beta''. When a (nuclear-encoded) sigma factor is associated with the core the holoenzyme is formed, which can initiate transcription. It depends on Mg(2+) as a cofactor. Requires Zn(2+) as cofactor.

Its subcellular location is the plastid. It is found in the chloroplast. It catalyses the reaction RNA(n) + a ribonucleoside 5'-triphosphate = RNA(n+1) + diphosphate. DNA-dependent RNA polymerase catalyzes the transcription of DNA into RNA using the four ribonucleoside triphosphates as substrates. The sequence is that of DNA-directed RNA polymerase subunit beta' from Angiopteris evecta (Mule's foot fern).